The sequence spans 486 residues: Cytochrome P450 monooxygenase aclC (486 aa).

Cys-427 serves as a coordination point for heme.

This sequence belongs to the cytochrome P450 family. The cofactor is heme.

Its pathway is mycotoxin biosynthesis. In terms of biological role, cytochrome P450 monooxygenase; part of the gene cluster that mediates the biosynthesis of aspirochlorine (or antibiotic A30641), an unusual halogenated spiro compound with distinctive antifungal properties due to selective inhibition of protein biosynthesis, and which is also active against bacteria, viruses, and murine tumor cells. The non-ribosomal peptide synthetase (NRPS) aclP is responsible the formation of the diketopiperazine (DKP) core from the condensation of 2 phenylalanine residues. One Phe residue is tailored into chlorotyrosine by hydroxylation and chlorination, whereas the second Phe undergoes an unprecedented C-C bond cleavage to be converted into glycine. After formation of the DKP, sulfur is incorporated into the DKP by conjugation with glutathione by aclG, followed by its stepwise degradation to the thiol by aclI, aclJ and aclK, and the dithiol oxidation by aclT. In addition, oxygenases (aclB, aclC, aclL and aclO) and O-methyltransferases (aclM and aclU) act as tailoring enzymes to produce the intermediate dechloroaspirochlorine. Ultimately, chlorination of dechloroaspirochlorine by the halogenase aclH is the last step in the aspirochlorine pathway. The polypeptide is Cytochrome P450 monooxygenase aclC (Aspergillus oryzae (strain ATCC 42149 / RIB 40) (Yellow koji mold)).